The following is a 156-amino-acid chain: Lipoprotein signal peptidase (156 aa).

2 helical membrane-spanning segments follow: residues isoleucine 52–valine 72 and phenylalanine 85–phenylalanine 105. Active-site residues include aspartate 111 and aspartate 129. Residues asparagine 121–leucine 141 traverse the membrane as a helical segment.

This sequence belongs to the peptidase A8 family.

The protein resides in the cell membrane. The catalysed reaction is Release of signal peptides from bacterial membrane prolipoproteins. Hydrolyzes -Xaa-Yaa-Zaa-|-(S,diacylglyceryl)Cys-, in which Xaa is hydrophobic (preferably Leu), and Yaa (Ala or Ser) and Zaa (Gly or Ala) have small, neutral side chains.. Its pathway is protein modification; lipoprotein biosynthesis (signal peptide cleavage). This protein specifically catalyzes the removal of signal peptides from prolipoproteins. The sequence is that of Lipoprotein signal peptidase from Halalkalibacterium halodurans (strain ATCC BAA-125 / DSM 18197 / FERM 7344 / JCM 9153 / C-125) (Bacillus halodurans).